The following is a 116-amino-acid chain: Ribosome-binding factor A (116 aa).

Belongs to the RbfA family. In terms of assembly, monomer. Binds 30S ribosomal subunits, but not 50S ribosomal subunits or 70S ribosomes.

The protein resides in the cytoplasm. Functionally, one of several proteins that assist in the late maturation steps of the functional core of the 30S ribosomal subunit. Associates with free 30S ribosomal subunits (but not with 30S subunits that are part of 70S ribosomes or polysomes). Required for efficient processing of 16S rRNA. May interact with the 5'-terminal helix region of 16S rRNA. The polypeptide is Ribosome-binding factor A (Streptococcus pneumoniae (strain Hungary19A-6)).